We begin with the raw amino-acid sequence, 737 residues long: NAD(P)H-quinone oxidoreductase subunit 5, chloroplastic (737 aa).

16 helical membrane passes run 9–29 (WIIPFIPLPVPMLIGAGLILF), 40–60 (WAFQSVLLLSIVMIFSIYLSI), 89–109 (IDPLTSIMSILITTVGIMVLI), 125–145 (FAYMSFFSTSMLGLVTSSNLI), 147–167 (IYIFWELVGLCSYLLIGFWFT), 185–205 (GDFGLLLGILGFYWITGSFEF), 219–239 (NELNFLFVTLCAVLLFAGAVA), 258–278 (TPISALIHAATMVAAGIFLVA), 286–306 (VIPYIMYLISVIGIITVLLGA), 327–347 (LGYMMLALGMGSYRSALFHLI), 354–374 (ALLFLGSGSIIHSMETIVGYS), 396–416 (ITFLLGTLSLCGIPPLACFWS), 425–445 (WLYSPIFAIIAWATAGLTAFY), 543–563 (LFPIFVLGLFTLFVGAIGIPF), 602–622 (VVSVSIAYFGIFIASFLYKPI), and 717–737 (SYLFLYLAYVSVFLLVYYLLF).

It belongs to the complex I subunit 5 family. NDH is composed of at least 16 different subunits, 5 of which are encoded in the nucleus.

The protein resides in the plastid. It is found in the chloroplast thylakoid membrane. It catalyses the reaction a plastoquinone + NADH + (n+1) H(+)(in) = a plastoquinol + NAD(+) + n H(+)(out). The enzyme catalyses a plastoquinone + NADPH + (n+1) H(+)(in) = a plastoquinol + NADP(+) + n H(+)(out). Functionally, NDH shuttles electrons from NAD(P)H:plastoquinone, via FMN and iron-sulfur (Fe-S) centers, to quinones in the photosynthetic chain and possibly in a chloroplast respiratory chain. The immediate electron acceptor for the enzyme in this species is believed to be plastoquinone. Couples the redox reaction to proton translocation, and thus conserves the redox energy in a proton gradient. The polypeptide is NAD(P)H-quinone oxidoreductase subunit 5, chloroplastic (ndhF) (Solanum lycopersicum (Tomato)).